The chain runs to 163 residues: 18 kDa protein (163 aa).

This is 18 kDa protein from Mus musculus (Mouse).